Here is a 225-residue protein sequence, read N- to C-terminus: Sugar fermentation stimulation protein homolog (225 aa).

The protein belongs to the SfsA family.

This is Sugar fermentation stimulation protein homolog from Sulfolobus acidocaldarius (strain ATCC 33909 / DSM 639 / JCM 8929 / NBRC 15157 / NCIMB 11770).